The primary structure comprises 318 residues: L-lactate dehydrogenase (318 aa).

NAD(+)-binding positions include Val-18, Asp-39, Lys-44, Tyr-69, and 83–84; that span reads GA. Residues Gln-86 and Arg-92 each coordinate substrate. Residues Ser-105, 122–124, and Ser-147 each bind NAD(+); that span reads VSN. A substrate-binding site is contributed by 124–127; sequence NPVD. Residue 152–155 participates in substrate binding; the sequence is DTSR. Catalysis depends on His-179, which acts as the Proton acceptor. A Phosphotyrosine modification is found at Tyr-225. Position 234 (Thr-234) interacts with substrate.

This sequence belongs to the LDH/MDH superfamily. LDH family. As to quaternary structure, homotetramer.

It is found in the cytoplasm. It carries out the reaction (S)-lactate + NAD(+) = pyruvate + NADH + H(+). It functions in the pathway fermentation; pyruvate fermentation to lactate; (S)-lactate from pyruvate: step 1/1. Its function is as follows. Catalyzes the conversion of lactate to pyruvate. This chain is L-lactate dehydrogenase, found in Clostridium botulinum (strain Okra / Type B1).